Here is a 75-residue protein sequence, read N- to C-terminus: Kappa-thalatoxin-Tas2a (75 aa).

An N-terminal signal peptide occupies residues Met1–Ala22. Residues Arg23–Arg40 constitute a propeptide that is removed on maturation. A ShKT domain is found at Cys43–Cys75. 3 cysteine pairs are disulfide-bonded: Cys43/Cys75, Cys52/Cys68, and Cys57/Cys72.

This sequence belongs to the sea anemone type 1 potassium channel toxin family. Type 1a subfamily.

Its subcellular location is the secreted. It localises to the nematocyst. Functionally, inhibits voltage-gated potassium channels (Kv) with higher potency for Kv1.1/KCNA1 and Kv1.3/KCNA3 (IC(50)=3.4 nM). This is Kappa-thalatoxin-Tas2a from Thalassianthus aster (Fuzzy-tipped anemone).